A 526-amino-acid chain; its full sequence is Delayed-rectifier potassium channel regulatory subunit KCNS1 (526 aa).

Over 1 to 217 (MLMLLVRGTH…LTMENPGYSL (217 aa)) the chain is Cytoplasmic. The helical transmembrane segment at 218–239 (PSKLFSCVSISVVLASIAAMCI) threads the bilayer. Topologically, residues 240-270 (HSLPEYQAREAAAAVAAVAAGRSPEGVRDDP) are extracellular. A helical membrane pass occupies residues 271-293 (VLRRLEYFCIAWFSFEVSSRLLL). Residues 294-304 (APSTRNFFCHP) are Cytoplasmic-facing. Residues 305-322 (LNLIDIVSVLPFYLTLLA) traverse the membrane as a helical segment. Over 323–337 (GVALGDQGGKEFGHL) the chain is Extracellular. A helical; Voltage-sensor membrane pass occupies residues 338–358 (GKVVQVFRLMRIFRVLKLARH). Topologically, residues 359 to 373 (STGLRSLGATLKHSY) are cytoplasmic. A helical membrane pass occupies residues 374–395 (REVGILLLYLAVGVSVFSGVAY). Residues 396–408 (TAEKEEDVGFNTI) are Extracellular-facing. Residues 409 to 420 (PACWWWGTVSMT) constitute an intramembrane region (helical). The Selectivity filter motif lies at 421–426 (TVGYGD). The stretch at 421-428 (TVGYGDVV) is an intramembrane region. The Extracellular segment spans residues 429–435 (PVTVAGK). The helical transmembrane segment at 436–464 (LAASGCILGGILVVALPITIIFNKFSHFY) threads the bilayer. Residues 465 to 526 (RRQKALEAAV…PSEPPHPQRY (62 aa)) are Cytoplasmic-facing. Residues 492–526 (VSEASLETSGETSQEGRSADLESQAPSEPPHPQRY) form a disordered region. The span at 496–507 (SLETSGETSQEG) shows a compositional bias: polar residues.

The protein belongs to the potassium channel family. S (TC 1.A.1.2) subfamily. Kv9.1/KCNS1 sub-subfamily. Heterotetramer with KCNB1. Heterotetramer with KCNB2. Does not form homomultimers.

It is found in the cell membrane. Functionally, potassium channel regulatory subunit that modulate the delayed rectifier voltage-gated potassium channel activity of KCNB1 and KCNB2 by altering their kinetics, expression levels, and shifting the half-inactivation potential to more polarized values. While it does not form functional channels on its own, it can form functional heterotetrameric channels with KCNB1 and KCNB2. Each regulatory subunit has unique regulatory properties that can lead to extensive inhibition, significant changes in kinetics, and/or substantial shifts in the voltage dependencies of the inactivation process. The polypeptide is Delayed-rectifier potassium channel regulatory subunit KCNS1 (Gorilla gorilla gorilla (Western lowland gorilla)).